The following is a 415-amino-acid chain: Glucose-1-phosphate adenylyltransferase (415 aa).

Alpha-D-glucose 1-phosphate contacts are provided by residues Tyr-98, Gly-163, 178–179 (EK), and Ser-189.

It belongs to the bacterial/plant glucose-1-phosphate adenylyltransferase family. In terms of assembly, homotetramer.

The enzyme catalyses alpha-D-glucose 1-phosphate + ATP + H(+) = ADP-alpha-D-glucose + diphosphate. It participates in glycan biosynthesis; glycogen biosynthesis. In terms of biological role, involved in the biosynthesis of ADP-glucose, a building block required for the elongation reactions to produce glycogen. Catalyzes the reaction between ATP and alpha-D-glucose 1-phosphate (G1P) to produce pyrophosphate and ADP-Glc. This chain is Glucose-1-phosphate adenylyltransferase, found in Fervidobacterium nodosum (strain ATCC 35602 / DSM 5306 / Rt17-B1).